Here is a 176-residue protein sequence, read N- to C-terminus: MAASTDMAGLEESFRKFAIHGDPKASGQEMNGKNWAKLCKDCKVADGKSVTGTDVDIVFSKVKGKSARVINYEEFKKALEELATKRFKGKSKEEAFDAICQLVAGKEPANVGVTKAKTGGAVDRLTDTSRYTGSHKERFDESGKGKGIAGRQDILDDSGYVSAYKNAGTYDAKVKK.

Alanine 2 bears the N-acetylalanine mark. The tract at residues 132-152 is disordered; the sequence is TGSHKERFDESGKGKGIAGRQ. Over residues 134–144 the composition is skewed to basic and acidic residues; the sequence is SHKERFDESGK.

The protein belongs to the TPPP family. As to expression, expressed in endometrium during the mid-secretory phase (LH + 7) (at protein level).

The protein localises to the cytoplasm. It localises to the cytoskeleton. In terms of biological role, regulator of microtubule dynamic that has microtubule bundling activity. Required for embryo implantation; possibly by regulating beta-catenin. Also required for decidualization via regulation of beta-catenin. The polypeptide is Tubulin polymerization-promoting protein family member 3 (Homo sapiens (Human)).